Reading from the N-terminus, the 888-residue chain is Translation initiation factor IF-2 (888 aa).

2 disordered regions span residues Thr96 to Glu122 and Glu158 to Thr302. Basic and acidic residues-rich tracts occupy residues Lys98–Ser114 and Glu158–Arg167. The segment covering Thr181–Glu206 has biased composition (polar residues). Residues Thr207–Ala225 show a composition bias toward low complexity. 2 stretches are compositionally biased toward basic and acidic residues: residues Ala226–Glu243 and Glu253–Gly269. A tr-type G domain is found at Ser390 to Lys559. The G1 stretch occupies residues Gly399–Thr406. Gly399–Thr406 contacts GTP. Residues Gly424–His428 form a G2 region. The G3 stretch occupies residues Asp445–Gly448. GTP is bound by residues Asp445–His449 and Asn499–Asp502. Residues Asn499–Asp502 form a G4 region. Positions Ser535 to Lys537 are G5.

The protein belongs to the TRAFAC class translation factor GTPase superfamily. Classic translation factor GTPase family. IF-2 subfamily.

It is found in the cytoplasm. Functionally, one of the essential components for the initiation of protein synthesis. Protects formylmethionyl-tRNA from spontaneous hydrolysis and promotes its binding to the 30S ribosomal subunits. Also involved in the hydrolysis of GTP during the formation of the 70S ribosomal complex. The protein is Translation initiation factor IF-2 of Nitrosomonas eutropha (strain DSM 101675 / C91 / Nm57).